The following is a 192-amino-acid chain: Immunity protein YqcF (192 aa).

In terms of assembly, probably interacts with cognate toxin YqcG but not with other non-cognate toxins. The interaction inhibits the toxic activity of YqcG.

The protein resides in the cytoplasm. In terms of biological role, immunity component of one of 6 LXG toxin-immunity modules in this strain. They promote kin selection, mediate competition in biofilms, and drive spatial segregation of different strains, indicating that LXG toxins may help avoid warfare between strains in biofilms. Mediates intercellular competition during biofilm formation; disruption of the operon disadvantages the bacteria, but overexpression of the cognate immunity protein restores growth in competition with wild-type. In situ neutralizes the toxic effect of cognate toxin YqcG. Neutralizes the toxic activity of cognate toxin YqcG upon expression in E.coli. Does not have immunity protein activity on other LXG toxins. The polypeptide is Immunity protein YqcF (yqcF) (Bacillus subtilis (strain 168)).